Reading from the N-terminus, the 657-residue chain is Probable Xaa-Pro aminopeptidase P (657 aa).

Positions 453, 464, 562, and 576 each coordinate Mn(2+).

The protein belongs to the peptidase M24B family. It depends on Mn(2+) as a cofactor.

The catalysed reaction is Release of any N-terminal amino acid, including proline, that is linked to proline, even from a dipeptide or tripeptide.. In terms of biological role, catalyzes the removal of a penultimate prolyl residue from the N-termini of peptides. In Talaromyces marneffei (strain ATCC 18224 / CBS 334.59 / QM 7333) (Penicillium marneffei), this protein is Probable Xaa-Pro aminopeptidase P (ampp).